Reading from the N-terminus, the 323-residue chain is tRNA U34 carboxymethyltransferase (323 aa).

Carboxy-S-adenosyl-L-methionine contacts are provided by residues lysine 91, tryptophan 105, lysine 110, glycine 130, 152–154 (DPT), 181–182 (IE), methionine 196, tyrosine 200, and arginine 315.

The protein belongs to the class I-like SAM-binding methyltransferase superfamily. CmoB family. Homotetramer.

The enzyme catalyses carboxy-S-adenosyl-L-methionine + 5-hydroxyuridine(34) in tRNA = 5-carboxymethoxyuridine(34) in tRNA + S-adenosyl-L-homocysteine + H(+). In terms of biological role, catalyzes carboxymethyl transfer from carboxy-S-adenosyl-L-methionine (Cx-SAM) to 5-hydroxyuridine (ho5U) to form 5-carboxymethoxyuridine (cmo5U) at position 34 in tRNAs. This Escherichia coli (strain SE11) protein is tRNA U34 carboxymethyltransferase.